Consider the following 816-residue polypeptide: Oxysterol-binding protein-related protein 1D (816 aa).

Positions 92–229 constitute a PH domain; sequence GAGVAGIMYK…WVEAFQVAKD (138 aa). The stretch at 290–321 forms a coiled coil; that stretch reads KHIILLDTLRQLETEKIELEATVVDETKEHDS. Residues 340 to 362 are disordered; that stretch reads SASDSEADNESQDGADVESDEDD. Over residues 344–362 the composition is skewed to acidic residues; the sequence is SEADNESQDGADVESDEDD. The stretch at 735–764 forms a coiled coil; the sequence is NGEYESANAEKLRLEQLQRQARRLQEKGWK.

This sequence belongs to the OSBP family. In terms of tissue distribution, expressed in roots, leaves, stems and flowers.

May be involved in the transport of sterols. This Arabidopsis thaliana (Mouse-ear cress) protein is Oxysterol-binding protein-related protein 1D (ORP1D).